Consider the following 317-residue polypeptide: GPI-specific phospholipase A2-like PGAP3 (317 aa).

A signal peptide spans 1–18 (MAPFLVLFLAGVVSASRG). Over 19 to 93 (DREPVYRDCV…QFHGKWPFSR (75 aa)) the chain is Lumenal. The N-linked (GlcNAc...) asparagine glycan is linked to Asn-35. A helical membrane pass occupies residues 94–114 (FLFFQEPASALASFLNGVASL). Topologically, residues 115 to 132 (LMLFRYRSSVPSSCQMYR) are cytoplasmic. Residues 133 to 153 (TCLAFSMVSVNAWFWSTIFHT) traverse the membrane as a helical segment. Over 154–163 (RDTALTEKMD) the chain is Lumenal. A helical transmembrane segment spans residues 164–180 (YFCASSVILHSIYLCCM). The Cytoplasmic segment spans residues 181–189 (RTFGLQYPS). The helical transmembrane segment at 190–210 (IANAFGAFLVLLFACHISYLT) threads the bilayer. The Lumenal segment spans residues 211–219 (LGRFDYSYN). A helical transmembrane segment spans residues 220–240 (MAANTSFGIVNLMWWLAWCMW). The Cytoplasmic segment spans residues 241 to 251 (RRFHQPYLWKC). The helical transmembrane segment at 252–272 (VLVVVLLQSLALLELLDFPPV) threads the bilayer. A topological domain (lumenal) is located at residue Met-273. Residues 274-293 (WILDAHALWHFSTIPLHFLF) traverse the membrane as a helical segment. Topologically, residues 294-317 (YSFLRDDSLYLLKVNHDDDIPKLD) are cytoplasmic.

This sequence belongs to the PGAP3 family.

It is found in the golgi apparatus membrane. In terms of biological role, involved in the fatty acid remodeling steps of GPI-anchor maturation where the unsaturated acyl chain at sn-2 of inositol phosphate is replaced by a saturated stearoyl chain. May catalyze the first step of the fatty acid remodeling, by removing the unsaturated acyl chain at sn-2 of inositol phosphate, generating a lyso-GPI intermediate. The fatty acid remodeling steps is critical for the integration of GPI-APs into lipid rafts. The sequence is that of GPI-specific phospholipase A2-like PGAP3 from Xenopus laevis (African clawed frog).